The sequence spans 132 residues: SGKKVDAWMGIPYAQPPLGPLRFRHPRPAERWTGVLNATKPPNSCVQIVDTVFGDFPGATMWNPNTPLSEDCLYINVVVPRPRPKNAAVMLWIFGGGFYSGTATLDVYDHRTLASEENVIVVSLQYRVASLG.

Asparagine 37 carries an N-linked (GlcNAc...) asparagine glycan. Cysteines 45 and 72 form a disulfide.

The protein belongs to the type-B carboxylesterase/lipase family.

The protein localises to the synapse. Its subcellular location is the secreted. It is found in the cell membrane. The enzyme catalyses acetylcholine + H2O = choline + acetate + H(+). Its function is as follows. Rapidly hydrolyzes choline released into the synapse. This chain is Acetylcholinesterase (ACE-1), found in Culex pipiens pipiens (Northern house mosquito).